Consider the following 459-residue polypeptide: Exodeoxyribonuclease 7 large subunit (459 aa).

It belongs to the XseA family. In terms of assembly, heterooligomer composed of large and small subunits.

Its subcellular location is the cytoplasm. The catalysed reaction is Exonucleolytic cleavage in either 5'- to 3'- or 3'- to 5'-direction to yield nucleoside 5'-phosphates.. Its function is as follows. Bidirectionally degrades single-stranded DNA into large acid-insoluble oligonucleotides, which are then degraded further into small acid-soluble oligonucleotides. The chain is Exodeoxyribonuclease 7 large subunit from Pseudomonas fluorescens (strain Pf0-1).